Consider the following 582-residue polypeptide: DNA mismatch repair protein MutL (582 aa).

The protein belongs to the DNA mismatch repair MutL/HexB family.

Functionally, this protein is involved in the repair of mismatches in DNA. It is required for dam-dependent methyl-directed DNA mismatch repair. May act as a 'molecular matchmaker', a protein that promotes the formation of a stable complex between two or more DNA-binding proteins in an ATP-dependent manner without itself being part of a final effector complex. The chain is DNA mismatch repair protein MutL from Buchnera aphidicola subsp. Schizaphis graminum (strain Sg).